A 282-amino-acid polypeptide reads, in one-letter code: BTB/POZ domain-containing protein At3g56230 (282 aa).

Residues 40–50 (GSKEDRHDKSN) are compositionally biased toward basic and acidic residues. A disordered region spans residues 40-66 (GSKEDRHDKSNHNSTINNGSSISSSPL). Positions 51-64 (HNSTINNGSSISSS) are enriched in low complexity. The BTB domain maps to 111–181 (ADILLKPGDD…LYTGTLASDK (71 aa)).

The protein operates within protein modification; protein ubiquitination. Functionally, may act as a substrate-specific adapter of an E3 ubiquitin-protein ligase complex (CUL3-RBX1-BTB) which mediates the ubiquitination and subsequent proteasomal degradation of target proteins. The protein is BTB/POZ domain-containing protein At3g56230 of Arabidopsis thaliana (Mouse-ear cress).